The sequence spans 342 residues: Transcriptional regulator of the unfolded protein response hacA (342 aa).

A disordered region spans residues 1-105 (MEDNFASVVE…TSRERKRLEM (105 aa)). Composition is skewed to basic and acidic residues over residues 35–48 (PETK…EEKK) and 74–88 (KTED…ERVL). The region spanning 80–143 (EQRRIERVLR…NRLSQQLAQL (64 aa)) is the bZIP domain. The interval 82-135 (RRIERVLRNRAAAQTSRERKRLEMEKLENEKIQMEQQNQFLLQRLSQMEAENNR) is basic motif. The segment at 136–143 (LSQQLAQL) is leucine-zipper. 2 disordered regions span residues 146–167 (EVRN…SPTL) and 306–330 (EPAH…GAST). The span at 315-330 (TPYQTSGLQPSLGAST) shows a compositional bias: polar residues.

Belongs to the bZIP family.

It localises to the nucleus. In terms of biological role, master transcriptional regulator of the unfolded protein response (UPR) that recognizes and binds to the UPR element (UPRE) in the promoter of UPR-regulated genes. In the canonical UPR pathway, the ireA RNase splices the cytoplasmic mRNA hacA, which alters the reading frame to allow translation of the bZIP transcription factor hacA. Induces the expression of pmrA, scrA and spfA in response to UPR. This chain is Transcriptional regulator of the unfolded protein response hacA, found in Aspergillus fumigatus (strain ATCC MYA-4609 / CBS 101355 / FGSC A1100 / Af293) (Neosartorya fumigata).